The following is a 215-amino-acid chain: Urease accessory protein UreG (215 aa).

24–31 (GPVGSGKT) contributes to the GTP binding site.

It belongs to the SIMIBI class G3E GTPase family. UreG subfamily. Homodimer. UreD, UreF and UreG form a complex that acts as a GTP-hydrolysis-dependent molecular chaperone, activating the urease apoprotein by helping to assemble the nickel containing metallocenter of UreC. The UreE protein probably delivers the nickel.

It localises to the cytoplasm. In terms of biological role, facilitates the functional incorporation of the urease nickel metallocenter. This process requires GTP hydrolysis, probably effectuated by UreG. The protein is Urease accessory protein UreG of Burkholderia cenocepacia (strain HI2424).